A 231-amino-acid polypeptide reads, in one-letter code: Uracil-DNA glycosylase (231 aa).

Residue Asp70 is the Proton acceptor of the active site.

This sequence belongs to the uracil-DNA glycosylase (UDG) superfamily. UNG family.

Its subcellular location is the cytoplasm. It carries out the reaction Hydrolyzes single-stranded DNA or mismatched double-stranded DNA and polynucleotides, releasing free uracil.. Excises uracil residues from the DNA which can arise as a result of misincorporation of dUMP residues by DNA polymerase or due to deamination of cytosine. This Campylobacter curvus (strain 525.92) protein is Uracil-DNA glycosylase.